A 244-amino-acid chain; its full sequence is NH(3)-dependent NAD(+) synthetase (244 aa).

Residue 29–36 coordinates ATP; sequence GISGGIDS. Asp35 contributes to the Mg(2+) binding site. Arg113 contacts deamido-NAD(+). Thr133 serves as a coordination point for ATP. Glu138 contacts Mg(2+). The deamido-NAD(+) site is built by Lys146 and Asp153. Positions 162 and 184 each coordinate ATP. 230-231 is a binding site for deamido-NAD(+); that stretch reads HK.

Belongs to the NAD synthetase family. In terms of assembly, homodimer.

The enzyme catalyses deamido-NAD(+) + NH4(+) + ATP = AMP + diphosphate + NAD(+) + H(+). The protein operates within cofactor biosynthesis; NAD(+) biosynthesis; NAD(+) from deamido-NAD(+) (ammonia route): step 1/1. Functionally, catalyzes the ATP-dependent amidation of deamido-NAD to form NAD. Uses ammonia as a nitrogen source. The protein is NH(3)-dependent NAD(+) synthetase of Mesoplasma florum (strain ATCC 33453 / NBRC 100688 / NCTC 11704 / L1) (Acholeplasma florum).